Reading from the N-terminus, the 147-residue chain is Large ribosomal subunit protein uL15 (147 aa).

The interval 1–62 (MDLNTLKPAL…GQMPLQRRLP (62 aa)) is disordered. Over residues 30-39 (TATKGHKGQK) the composition is skewed to basic residues.

It belongs to the universal ribosomal protein uL15 family. Part of the 50S ribosomal subunit.

In terms of biological role, binds to the 23S rRNA. This is Large ribosomal subunit protein uL15 from Pelobacter propionicus (strain DSM 2379 / NBRC 103807 / OttBd1).